Consider the following 37-residue polypeptide: Large ribosomal subunit protein bL36 (37 aa).

This sequence belongs to the bacterial ribosomal protein bL36 family.

This Nostoc punctiforme (strain ATCC 29133 / PCC 73102) protein is Large ribosomal subunit protein bL36.